The chain runs to 357 residues: S-adenosylmethionine:tRNA ribosyltransferase-isomerase (357 aa).

The protein belongs to the QueA family. Monomer.

Its subcellular location is the cytoplasm. It carries out the reaction 7-aminomethyl-7-carbaguanosine(34) in tRNA + S-adenosyl-L-methionine = epoxyqueuosine(34) in tRNA + adenine + L-methionine + 2 H(+). The protein operates within tRNA modification; tRNA-queuosine biosynthesis. Functionally, transfers and isomerizes the ribose moiety from AdoMet to the 7-aminomethyl group of 7-deazaguanine (preQ1-tRNA) to give epoxyqueuosine (oQ-tRNA). This Hamiltonella defensa subsp. Acyrthosiphon pisum (strain 5AT) protein is S-adenosylmethionine:tRNA ribosyltransferase-isomerase.